The chain runs to 347 residues: MSPTDPHSLLGLSPGAGEREIKHAFRRLAMRWHPDRNADPAAIEHFKRLRAAYEDLLAEYSRCPAPAAAPHDAQAADARPEPPPEAPPRGADRREDLVLTMEEAFAGGEKAFTIADEIPCGACGGSGEEVLRHTRLCATCHGSGRVRDGRSLTACADCAGRGYLSRQACGACHGSGQARAARKLHVRIPAGVLDGDELRVAGADEDCDRSGGEPGDLILRVVLAPHALYRLDGRDLILSRPVSAFRMLLGGELPIPLPDGVRHLKLESGRATTRELRVKGAGFPGRGKQRAGALIVRLVPVLPEAPDAEILALLEIAESRLQNTLSRHLPDVASWEERWLPDIPETR.

The J domain maps to 5-75 (DPHSLLGLSP…PAAAPHDAQA (71 aa)). Residues 68–77 (AAPHDAQAAD) show a composition bias toward low complexity. Positions 68-91 (AAPHDAQAADARPEPPPEAPPRGA) are disordered. A CR-type zinc finger spans residues 107-181 (GGEKAFTIAD…CHGSGQARAA (75 aa)). Zn(2+)-binding residues include Cys120, Cys123, Cys137, Cys140, Cys155, Cys158, Cys169, and Cys172. 4 CXXCXGXG motif repeats span residues 120–127 (CGACGGSG), 137–144 (CATCHGSG), 155–162 (CADCAGRG), and 169–176 (CGACHGSG).

The protein belongs to the DnaJ family. As to quaternary structure, homodimer. The cofactor is Zn(2+).

The protein resides in the cytoplasm. Functionally, participates actively in the response to hyperosmotic and heat shock by preventing the aggregation of stress-denatured proteins and by disaggregating proteins, also in an autonomous, DnaK-independent fashion. Unfolded proteins bind initially to DnaJ; upon interaction with the DnaJ-bound protein, DnaK hydrolyzes its bound ATP, resulting in the formation of a stable complex. GrpE releases ADP from DnaK; ATP binding to DnaK triggers the release of the substrate protein, thus completing the reaction cycle. Several rounds of ATP-dependent interactions between DnaJ, DnaK and GrpE are required for fully efficient folding. Also involved, together with DnaK and GrpE, in the DNA replication of plasmids through activation of initiation proteins. This chain is Chaperone protein DnaJ 1, found in Aromatoleum aromaticum (strain DSM 19018 / LMG 30748 / EbN1) (Azoarcus sp. (strain EbN1)).